The primary structure comprises 964 residues: Siderophore exporter MmpL5 (964 aa).

The next 12 membrane-spanning stretches (helical) occupy residues 31–51 (FAVP…VTVP), 203–223 (SLQV…LLVY), 230–250 (AIML…VAFL), 255–275 (IIGL…AAAT), 302–322 (MFGG…GATF), 340–360 (AIGM…IIAV), 389–409 (WPGP…LTLP), 773–793 (TYDL…IMLI), 803–823 (VIVG…VLIW), 826–846 (ILGI…LLAV), 880–900 (VVTA…VSEL), and 923–943 (SFMT…PQVV).

The protein belongs to the resistance-nodulation-cell division (RND) (TC 2.A.6) family. MmpL subfamily. As to quaternary structure, interacts with MmpS5.

It is found in the cell inner membrane. Part of an export system, which is required for biosynthesis and secretion of siderophores. The polypeptide is Siderophore exporter MmpL5 (mmpL5) (Mycobacterium tuberculosis (strain CDC 1551 / Oshkosh)).